We begin with the raw amino-acid sequence, 350 residues long: UDP-3-O-acylglucosamine N-acyltransferase (350 aa).

The Proton acceptor role is filled by His244.

This sequence belongs to the transferase hexapeptide repeat family. LpxD subfamily. As to quaternary structure, homotrimer.

It carries out the reaction a UDP-3-O-[(3R)-3-hydroxyacyl]-alpha-D-glucosamine + a (3R)-hydroxyacyl-[ACP] = a UDP-2-N,3-O-bis[(3R)-3-hydroxyacyl]-alpha-D-glucosamine + holo-[ACP] + H(+). The protein operates within bacterial outer membrane biogenesis; LPS lipid A biosynthesis. In terms of biological role, catalyzes the N-acylation of UDP-3-O-acylglucosamine using 3-hydroxyacyl-ACP as the acyl donor. Is involved in the biosynthesis of lipid A, a phosphorylated glycolipid that anchors the lipopolysaccharide to the outer membrane of the cell. The protein is UDP-3-O-acylglucosamine N-acyltransferase of Herminiimonas arsenicoxydans.